The chain runs to 221 residues: Late protein I196L (221 aa).

3 tandem repeats follow at residues 28–48, 49–69, and 70–90. One copy of the 4; approximate repeat lies at 91–112; that stretch reads SNYSMTAIPNNISDKEDYTYFS.

The protein belongs to the asfivirus I196L family.

This African swine fever virus (isolate Tick/Malawi/Lil 20-1/1983) (ASFV) protein is Late protein I196L.